The following is a 276-amino-acid chain: Secretagogin (276 aa).

6 EF-hand domains span residues 12–47 (LDAAGFWQIWQRFDADEKGYIEEKELDAFFHHVLTK), 58–93 (NVWKMKQQFMAAHDVSKDGHIQMKELACLFLSEDEN), 105–140 (DSSVEFMQIWRKYDADSSGFISAAELCNFLRDLFLH), 149–184 (KLEEYTGTMMKIFDKNKDGRLDLNDLARILALQENF), 197–232 (ERKRDFEKIFAHYDVSKTGALEGPEVDGFVKDMMEL), and 240–276 (VDLDKFREILLRHCDVNKDGKIQKSELALCLGLKINP). 23 residues coordinate Ca(2+): aspartate 71, serine 73, aspartate 75, histidine 77, glutamate 82, aspartate 118, aspartate 120, serine 122, glutamate 129, aspartate 162, asparagine 164, aspartate 166, arginine 168, aspartate 173, aspartate 210, serine 212, threonine 214, glutamate 221, aspartate 254, asparagine 256, aspartate 258, lysine 260, and glutamate 265.

The protein resides in the cytoplasm. It is found in the secreted. The protein localises to the cytoplasmic vesicle. Its subcellular location is the secretory vesicle membrane. In Sus scrofa (Pig), this protein is Secretagogin (SCGN).